A 63-amino-acid polypeptide reads, in one-letter code: Adipokinetic prohormone type 1 (63 aa).

An N-terminal signal peptide occupies residues Met1–Ala22. Gln23 bears the Pyrrolidone carboxylic acid mark. Residue Thr32 is modified to Threonine amide.

It belongs to the AKH/HRTH/RPCH family. As to quaternary structure, adipokinetic hormone precursor-related peptide (APRP) can form three type of disulfide-bond dimers: p1 (alpha-alpha), p2 (alpha-beta), and p3 (beta-beta).

The protein resides in the secreted. In terms of biological role, this hormone, released from cells in the corpora cardiaca, causes release of diglycerides from the fat body and stimulation of muscles to use these diglycerides as an energy source during energy-demanding processes. The polypeptide is Adipokinetic prohormone type 1 (Schistocerca gregaria (Desert locust)).